The following is a 470-amino-acid chain: Argininosuccinate lyase (470 aa).

Belongs to the lyase 1 family. Argininosuccinate lyase subfamily.

The protein localises to the cytoplasm. It carries out the reaction 2-(N(omega)-L-arginino)succinate = fumarate + L-arginine. It participates in amino-acid biosynthesis; L-arginine biosynthesis; L-arginine from L-ornithine and carbamoyl phosphate: step 3/3. In Leptospira borgpetersenii serovar Hardjo-bovis (strain JB197), this protein is Argininosuccinate lyase.